The following is a 398-amino-acid chain: Phosphoglycerate kinase (398 aa).

Residues 21–23 (DFN), R36, 59–62 (HLGR), R119, and R157 each bind substrate. ATP-binding positions include K208, G296, E327, and 354 to 357 (GGDS).

This sequence belongs to the phosphoglycerate kinase family. In terms of assembly, monomer.

It is found in the cytoplasm. The catalysed reaction is (2R)-3-phosphoglycerate + ATP = (2R)-3-phospho-glyceroyl phosphate + ADP. The protein operates within carbohydrate degradation; glycolysis; pyruvate from D-glyceraldehyde 3-phosphate: step 2/5. The chain is Phosphoglycerate kinase from Streptococcus pyogenes serotype M3 (strain ATCC BAA-595 / MGAS315).